Consider the following 681-residue polypeptide: Spermatogenesis-associated protein 21 (681 aa).

The segment covering 1–14 has biased composition (basic and acidic residues); it reads MENRNTHTHPESKA. 2 disordered regions span residues 1–284 and 298–336; these read MENR…ANSR and EEATHRRTLKSRGLTARRSPKTVTSVSTSGPISSSVPTL. Polar residues-rich tracts occupy residues 83–94 and 159–173; these read QEPSARPRTTQD and PSNSRSQPLKNNSPS. Basic and acidic residues predominate over residues 251 to 261; that stretch reads PEERDTEKKEL. Residues 264-281 show a composition bias toward polar residues; it reads GQKQRQQALSAAGTQGPA. Residues 319-335 are compositionally biased toward low complexity; the sequence is TVTSVSTSGPISSSVPT. An EF-hand domain is found at 464-499; it reads FTPAQVEEALMSADVNGDGHVDFKDFLAVMTDTKRF. Positions 477, 479, 481, 483, and 488 each coordinate Ca(2+). Positions 653–681 are disordered; that stretch reads LFFQPGQQGSREHSSDSRKWLSSMPARTH. The span at 662–671 shows a compositional bias: basic and acidic residues; it reads SREHSSDSRK.

Its function is as follows. Involved in the differentiation of haploid spermatids. This is Spermatogenesis-associated protein 21 (Spata21) from Mus musculus (Mouse).